Here is a 327-residue protein sequence, read N- to C-terminus: uncharacterized protein (327 aa).

Residues K12–E79 form the S4 RNA-binding domain. Residue D136 is part of the active site.

Belongs to the pseudouridine synthase RluA family.

The catalysed reaction is a uridine in RNA = a pseudouridine in RNA. This is an uncharacterized protein from Helicobacter pylori (strain ATCC 700392 / 26695) (Campylobacter pylori).